Reading from the N-terminus, the 940-residue chain is Protein translocase subunit SecA (940 aa).

Residues Q85, 103 to 107 (GEGKT), and D505 each bind ATP. A disordered region spans residues 851-940 (PVQDGAERPS…KGGGGRRRKK (90 aa)). The segment covering 855-865 (GAERPSLEKEG) has biased composition (basic and acidic residues). Over residues 928–940 (RRRKGGGGRRRKK) the composition is skewed to basic residues.

Belongs to the SecA family. In terms of assembly, monomer and homodimer. Part of the essential Sec protein translocation apparatus which comprises SecA, SecYEG and auxiliary proteins SecDF. Other proteins may also be involved.

Its subcellular location is the cell membrane. It is found in the cytoplasm. The enzyme catalyses ATP + H2O + cellular proteinSide 1 = ADP + phosphate + cellular proteinSide 2.. In terms of biological role, part of the Sec protein translocase complex. Interacts with the SecYEG preprotein conducting channel. Has a central role in coupling the hydrolysis of ATP to the transfer of proteins into and across the cell membrane, serving as an ATP-driven molecular motor driving the stepwise translocation of polypeptide chains across the membrane. The sequence is that of Protein translocase subunit SecA from Streptomyces griseus.